A 119-amino-acid chain; its full sequence is U-scoloptoxin(01)-Er1a (119 aa).

An N-terminal signal peptide occupies residues 1 to 22; that stretch reads MEIHSNIILLLLIALFAIFVKM. The region spanning 39 to 97 is the Chitin-binding type-2 domain; that stretch reads NFACSGKKPGFYADEGFDCQVYHMCSPEGQLTTYLCGPGTIFNQKKLVCDLPTNYNCAD. C74 and C87 form a disulfide bridge.

The protein belongs to the scoloptoxin-01 family. In terms of processing, contains 3 disulfide bonds. As to expression, expressed by the venom gland.

The protein localises to the secreted. The chain is U-scoloptoxin(01)-Er1a from Ethmostigmus rubripes (Giant centipede).